The sequence spans 511 residues: cAMP-regulated M3L protein (511 aa).

It to D.discoideum protein M3R.

The polypeptide is cAMP-regulated M3L protein (prtA) (Dictyostelium discoideum (Social amoeba)).